The chain runs to 323 residues: Annexin A3 (323 aa).

Alanine 2 carries the N-acetylalanine modification. Annexin repeat units lie at residues phenylalanine 18–threonine 89, proline 90–asparagine 161, glutamine 173–arginine 245, and asparagine 249–glycine 320. Lysine 177 carries the N6-acetyllysine modification. At threonine 267 the chain carries Phosphothreonine.

Belongs to the annexin family.

Inhibitor of phospholipase A2, also possesses anti-coagulant properties. Also cleaves the cyclic bond of inositol 1,2-cyclic phosphate to form inositol 1-phosphate. This is Annexin A3 (ANXA3) from Bos taurus (Bovine).